Reading from the N-terminus, the 135-residue chain is Global transcriptional regulator Spx 2 (135 aa).

The active site involves Cys10.

The protein belongs to the ArsC family. Spx subfamily. In terms of assembly, interacts with the C-terminal domain of the alpha subunit of the RNAP.

The protein resides in the cytoplasm. Its function is as follows. Global transcriptional regulator that plays a key role in stress response and exerts either positive or negative regulation of genes. Acts by interacting with the C-terminal domain of the alpha subunit of the RNA polymerase (RNAP). This interaction can enhance binding of RNAP to the promoter region of target genes and stimulate their transcription, or block interaction of RNAP with activator. This chain is Global transcriptional regulator Spx 2, found in Oceanobacillus iheyensis (strain DSM 14371 / CIP 107618 / JCM 11309 / KCTC 3954 / HTE831).